A 122-amino-acid chain; its full sequence is Large ribosomal subunit protein uL14 (122 aa).

This sequence belongs to the universal ribosomal protein uL14 family. In terms of assembly, part of the 50S ribosomal subunit. Forms a cluster with proteins L3 and L19. In the 70S ribosome, L14 and L19 interact and together make contacts with the 16S rRNA in bridges B5 and B8.

Functionally, binds to 23S rRNA. Forms part of two intersubunit bridges in the 70S ribosome. This Chloroherpeton thalassium (strain ATCC 35110 / GB-78) protein is Large ribosomal subunit protein uL14.